The primary structure comprises 394 residues: 1-deoxy-D-xylulose 5-phosphate reductoisomerase (394 aa).

Residues T12, G13, S14, I15, G38, N41, and N132 each contribute to the NADPH site. Position 133 (K133) interacts with 1-deoxy-D-xylulose 5-phosphate. Residue E134 coordinates NADPH. D156 contributes to the Mn(2+) binding site. 4 residues coordinate 1-deoxy-D-xylulose 5-phosphate: S157, E158, S182, and H205. E158 is a Mn(2+) binding site. G211 contributes to the NADPH binding site. Residues S218, N223, K224, and E227 each contribute to the 1-deoxy-D-xylulose 5-phosphate site. E227 provides a ligand contact to Mn(2+).

This sequence belongs to the DXR family. It depends on Mg(2+) as a cofactor. Mn(2+) serves as cofactor.

It carries out the reaction 2-C-methyl-D-erythritol 4-phosphate + NADP(+) = 1-deoxy-D-xylulose 5-phosphate + NADPH + H(+). The protein operates within isoprenoid biosynthesis; isopentenyl diphosphate biosynthesis via DXP pathway; isopentenyl diphosphate from 1-deoxy-D-xylulose 5-phosphate: step 1/6. Catalyzes the NADPH-dependent rearrangement and reduction of 1-deoxy-D-xylulose-5-phosphate (DXP) to 2-C-methyl-D-erythritol 4-phosphate (MEP). This Pseudarthrobacter chlorophenolicus (strain ATCC 700700 / DSM 12829 / CIP 107037 / JCM 12360 / KCTC 9906 / NCIMB 13794 / A6) (Arthrobacter chlorophenolicus) protein is 1-deoxy-D-xylulose 5-phosphate reductoisomerase.